The sequence spans 917 residues: Translation initiation factor IF-2 (917 aa).

The tract at residues 241-312 is disordered; it reads EEAKKGTLHK…GGWRSGGGRK (72 aa). Over residues 252 to 262 the composition is skewed to basic and acidic residues; sequence AKAEGAEDKKK. Polar residues predominate over residues 274–283; that stretch reads SSETSSTWQE. The segment covering 298–308 has biased composition (gly residues); the sequence is TSGGVGGWRSG. A tr-type G domain is found at 415–582; that stretch reads PRPPVVTVMG…NVLLQAEILE (168 aa). Residues 424 to 431 are G1; that stretch reads GHVDHGKT. A GTP-binding site is contributed by 424 to 431; sequence GHVDHGKT. The tract at residues 449–453 is G2; it reads GITQH. Residues 470–473 form a G3 region; that stretch reads DTPG. GTP contacts are provided by residues 470–474 and 524–527; these read DTPGH and NKID. The tract at residues 524 to 527 is G4; it reads NKID. A G5 region spans residues 560 to 562; sequence SAK.

Belongs to the TRAFAC class translation factor GTPase superfamily. Classic translation factor GTPase family. IF-2 subfamily.

It is found in the cytoplasm. In terms of biological role, one of the essential components for the initiation of protein synthesis. Protects formylmethionyl-tRNA from spontaneous hydrolysis and promotes its binding to the 30S ribosomal subunits. Also involved in the hydrolysis of GTP during the formation of the 70S ribosomal complex. The polypeptide is Translation initiation factor IF-2 (Polynucleobacter necessarius subsp. necessarius (strain STIR1)).